The primary structure comprises 259 residues: uncharacterized protein (259 aa).

The signal sequence occupies residues M1–G22. C23 is lipidated: N-palmitoyl cysteine. C23 carries S-diacylglycerol cysteine lipidation.

This sequence belongs to the staphylococcal tandem lipoprotein family.

It is found in the cell membrane. This is an uncharacterized protein from Staphylococcus epidermidis (strain ATCC 35984 / DSM 28319 / BCRC 17069 / CCUG 31568 / BM 3577 / RP62A).